Consider the following 105-residue polypeptide: Large ribosomal subunit protein eL33 (105 aa).

It belongs to the eukaryotic ribosomal protein eL33 family.

Functionally, the protein was found to bind to both initiator and elongator tRNAs and consequently was assigned to the P site or P and A site. In Dictyostelium discoideum (Social amoeba), this protein is Large ribosomal subunit protein eL33 (rpl35a).